The chain runs to 348 residues: Protein RecA (348 aa).

68–75 contributes to the ATP binding site; the sequence is GPESSGKT.

Belongs to the RecA family.

The protein localises to the cytoplasm. Its function is as follows. Can catalyze the hydrolysis of ATP in the presence of single-stranded DNA, the ATP-dependent uptake of single-stranded DNA by duplex DNA, and the ATP-dependent hybridization of homologous single-stranded DNAs. It interacts with LexA causing its activation and leading to its autocatalytic cleavage. This is Protein RecA from Rhodococcus opacus (strain B4).